Reading from the N-terminus, the 258-residue chain is Flap endonuclease Xni (258 aa).

Residue aspartate 109 coordinates Mg(2+). Residues 165-254 (VKPEQLPDYW…GFNLQDIRYL (90 aa)) form the 5'-3' exonuclease domain. Residues leucine 176, alanine 177, proline 185, isoleucine 187, and isoleucine 190 each coordinate K(+). The interaction with DNA stretch occupies residues 189-194 (GIGPKA).

Belongs to the Xni family. Mg(2+) is required as a cofactor. Requires K(+) as cofactor.

In terms of biological role, has flap endonuclease activity. During DNA replication, flap endonucleases cleave the 5'-overhanging flap structure that is generated by displacement synthesis when DNA polymerase encounters the 5'-end of a downstream Okazaki fragment. The sequence is that of Flap endonuclease Xni from Photobacterium profundum (strain SS9).